Reading from the N-terminus, the 455-residue chain is Differentiation-associated protein 1 (455 aa).

The signal sequence occupies residues Met-1 to Ser-21. The tract at residues Ile-349–Ser-434 is disordered. A compositionally biased stretch (low complexity) spans Ser-351 to Ser-423. A lipid anchor (GPI-like-anchor amidated serine) is attached at Ser-433. The propeptide at Ser-434–Phe-455 is removed in mature form.

It is found in the cell membrane. Plays a role in differentiation. The chain is Differentiation-associated protein 1 (dia1) from Dictyostelium discoideum (Social amoeba).